The following is a 334-amino-acid chain: Mitochondrial glycine transporter (334 aa).

Solcar repeat units lie at residues 10 to 94, 127 to 211, and 234 to 318; these read SKSS…IRQA, LSNT…FKRR, and RAAA…LIMR. Helical transmembrane passes span 16-41, 69-95, 133-158, 186-209, 238-264, and 293-311; these read FVAG…TRVQ, GTVP…RQAA, LLAG…VRYE, GFGA…EQFK, VNFS…KTRI, and GLGL…AWTL.

Belongs to the mitochondrial carrier (TC 2.A.29) family. SLC25A38 subfamily.

The protein resides in the mitochondrion inner membrane. The catalysed reaction is glycine(in) = glycine(out). Its function is as follows. Mitochondrial glycine transporter that imports glycine into the mitochondrial matrix. Plays an important role in providing glycine for the first enzymatic step in heme biosynthesis, the condensation of glycine with succinyl-CoA to produce 5-aminolevulinate (ALA) in the mitochondrial matrix. The chain is Mitochondrial glycine transporter from Pyricularia oryzae (strain 70-15 / ATCC MYA-4617 / FGSC 8958) (Rice blast fungus).